A 130-amino-acid polypeptide reads, in one-letter code: MVRISVLNDGLKSMYNAEKRGKRQVMIRPSSKVIIKFLIVMQKHGYIGEFEYVDDHRSGKIVVELNGRLNKCGVISPRFDVGVKEIEGWTARLLPSRQFGFIVLTTSAGIMDHEEARRKNVGGKVLGFFY.

It belongs to the universal ribosomal protein uS8 family.

This Arabidopsis thaliana (Mouse-ear cress) protein is Small ribosomal subunit protein uS8x (RPS15AD).